Reading from the N-terminus, the 73-residue chain is Long neurotoxin 1 (73 aa).

Intrachain disulfides connect C3/C21, C14/C42, C27/C31, C46/C57, and C58/C63.

It belongs to the three-finger toxin family. Long-chain subfamily. Type II alpha-neurotoxin sub-subfamily. Expressed by the venom gland.

The protein resides in the secreted. Functionally, binds with high affinity to muscular (alpha-1/CHRNA1) and neuronal (alpha-7/CHRNA7) nicotinic acetylcholine receptor (nAChR) and inhibits acetylcholine from binding to the receptor, thereby impairing neuromuscular and neuronal transmission. The polypeptide is Long neurotoxin 1 (Ophiophagus hannah (King cobra)).